A 213-amino-acid polypeptide reads, in one-letter code: MITLALSKGRIFEETMPLLAAAGIEVTEDPEKSRKLILATTRPDVRVVLVRASDVPTYVQYGGADLGVTGLDVLLENGNQGMYQPLDLRIAACRLSVAVRADYDYASAVKQGSRLRVATKYVGLAREFFASKGVHVDLIKLYGSMELAPLTGLADAIVDLVSTGNTLKANHLVEVERIMDISARLVVNQAALKLKREPIRRIIDAFASAIPTA.

Belongs to the ATP phosphoribosyltransferase family. Short subfamily. As to quaternary structure, heteromultimer composed of HisG and HisZ subunits.

The protein localises to the cytoplasm. It carries out the reaction 1-(5-phospho-beta-D-ribosyl)-ATP + diphosphate = 5-phospho-alpha-D-ribose 1-diphosphate + ATP. The protein operates within amino-acid biosynthesis; L-histidine biosynthesis; L-histidine from 5-phospho-alpha-D-ribose 1-diphosphate: step 1/9. In terms of biological role, catalyzes the condensation of ATP and 5-phosphoribose 1-diphosphate to form N'-(5'-phosphoribosyl)-ATP (PR-ATP). Has a crucial role in the pathway because the rate of histidine biosynthesis seems to be controlled primarily by regulation of HisG enzymatic activity. The chain is ATP phosphoribosyltransferase from Variovorax paradoxus (strain S110).